The primary structure comprises 1058 residues: Translation initiation factor IF-2 (1058 aa).

The span at 1–12 (MNDTKTPGDKTL) shows a compositional bias: basic and acidic residues. Residues 1 to 468 (MNDTKTPGDK…MTGHRGMQES (468 aa)) are disordered. Low complexity predominate over residues 54-81 (APGEAGAPSGTPAAAPAATPAPAAAAPR). The segment covering 82 to 95 (PATPAPAAPRPAAP) has biased composition (pro residues). Positions 96 to 108 (ATPAQPAAEAKAP) are enriched in low complexity. A compositionally biased stretch (pro residues) spans 109–119 (APAPTPAPAAP). 2 stretches are compositionally biased toward low complexity: residues 120-156 (AAPV…VEVP) and 164-228 (EPVA…QRPG). Gly residues predominate over residues 244-271 (RSGGPGSDRRGGPGGQNRPGQNRQGGSG). Residues 292 to 364 (ARVREVEERR…ARKRFGEETG (73 aa)) are compositionally biased toward basic and acidic residues. Positions 368 to 396 (GASAPSTSTARPLTPRPAGTTTTTGAPAA) are enriched in low complexity. Basic residues predominate over residues 452-461 (FRRRTQRMTG). The tr-type G domain maps to 555 to 725 (PRPPVVTIMG…SLQSEVLDLK (171 aa)). A G1 region spans residues 564–571 (GHVDHGKT). 564-571 (GHVDHGKT) lines the GTP pocket. The G2 stretch occupies residues 589-593 (GITQH). The interval 611 to 614 (DTPG) is G3. GTP-binding positions include 611–615 (DTPGH) and 665–668 (NKID). The interval 665-668 (NKID) is G4. The tract at residues 701 to 703 (SAT) is G5.

Belongs to the TRAFAC class translation factor GTPase superfamily. Classic translation factor GTPase family. IF-2 subfamily.

The protein localises to the cytoplasm. In terms of biological role, one of the essential components for the initiation of protein synthesis. Protects formylmethionyl-tRNA from spontaneous hydrolysis and promotes its binding to the 30S ribosomal subunits. Also involved in the hydrolysis of GTP during the formation of the 70S ribosomal complex. This Azorhizobium caulinodans (strain ATCC 43989 / DSM 5975 / JCM 20966 / LMG 6465 / NBRC 14845 / NCIMB 13405 / ORS 571) protein is Translation initiation factor IF-2.